The following is a 129-amino-acid chain: Small ribosomal subunit protein uS11c (129 aa).

It belongs to the universal ribosomal protein uS11 family. In terms of assembly, part of the 30S ribosomal subunit.

It localises to the plastid. The protein resides in the chloroplast. The protein is Small ribosomal subunit protein uS11c of Rhodomonas salina (Cryptomonas salina).